The following is a 310-amino-acid chain: Methionyl-tRNA formyltransferase (310 aa).

(6S)-5,6,7,8-tetrahydrofolate is bound at residue 114–117; it reads SLLP.

It belongs to the Fmt family.

It catalyses the reaction L-methionyl-tRNA(fMet) + (6R)-10-formyltetrahydrofolate = N-formyl-L-methionyl-tRNA(fMet) + (6S)-5,6,7,8-tetrahydrofolate + H(+). In terms of biological role, attaches a formyl group to the free amino group of methionyl-tRNA(fMet). The formyl group appears to play a dual role in the initiator identity of N-formylmethionyl-tRNA by promoting its recognition by IF2 and preventing the misappropriation of this tRNA by the elongation apparatus. This is Methionyl-tRNA formyltransferase from Granulibacter bethesdensis (strain ATCC BAA-1260 / CGDNIH1).